The primary structure comprises 255 residues: NAD kinase (255 aa).

Asp-44 serves as the catalytic Proton acceptor. NAD(+) contacts are provided by residues 44 to 45, His-49, 114 to 115, Asp-144, Ala-152, 155 to 160, and Gln-216; these read DG, NE, and SAYNLS.

The protein belongs to the NAD kinase family. Requires a divalent metal cation as cofactor.

It localises to the cytoplasm. The catalysed reaction is NAD(+) + ATP = ADP + NADP(+) + H(+). Functionally, involved in the regulation of the intracellular balance of NAD and NADP, and is a key enzyme in the biosynthesis of NADP. Catalyzes specifically the phosphorylation on 2'-hydroxyl of the adenosine moiety of NAD to yield NADP. This chain is NAD kinase, found in Rickettsia prowazekii (strain Madrid E).